A 133-amino-acid polypeptide reads, in one-letter code: UPF0344 protein SE_0666 (133 aa).

4 helical membrane passes run Met1–Leu21, Leu42–Ala62, Met71–Ile91, and Phe103–Trp123.

Belongs to the UPF0344 family.

The protein localises to the cell membrane. In Staphylococcus epidermidis (strain ATCC 12228 / FDA PCI 1200), this protein is UPF0344 protein SE_0666.